A 305-amino-acid chain; its full sequence is Oxygen-dependent coproporphyrinogen-III oxidase (305 aa).

Ser-99 is a substrate binding site. Residues His-103 and His-113 each contribute to the a divalent metal cation site. His-113 serves as the catalytic Proton donor. A substrate-binding site is contributed by Asn-115–Arg-117. 2 residues coordinate a divalent metal cation: His-152 and His-182. An important for dimerization region spans residues Tyr-247–Glu-282. A substrate-binding site is contributed by Gly-265–Arg-267.

This sequence belongs to the aerobic coproporphyrinogen-III oxidase family. As to quaternary structure, homodimer. A divalent metal cation serves as cofactor.

Its subcellular location is the cytoplasm. It carries out the reaction coproporphyrinogen III + O2 + 2 H(+) = protoporphyrinogen IX + 2 CO2 + 2 H2O. It participates in porphyrin-containing compound metabolism; protoporphyrin-IX biosynthesis; protoporphyrinogen-IX from coproporphyrinogen-III (O2 route): step 1/1. Functionally, involved in the heme biosynthesis. Catalyzes the aerobic oxidative decarboxylation of propionate groups of rings A and B of coproporphyrinogen-III to yield the vinyl groups in protoporphyrinogen-IX. The sequence is that of Oxygen-dependent coproporphyrinogen-III oxidase from Vibrio cholerae serotype O1 (strain M66-2).